A 353-amino-acid chain; its full sequence is Photosystem II protein D1 (353 aa).

An N-acetylthreonine modification is found at Thr2. Residue Thr2 is modified to Phosphothreonine. Transmembrane regions (helical) follow at residues 29-46, 118-133, and 142-156; these read YIGWFGVLMIPTLLTATS, HFLLGVACYMGREWEL, and WIAVAYSAPVAAATA. Residue His118 coordinates chlorophyll a. Residue Tyr126 participates in pheophytin a binding. The [CaMn4O5] cluster site is built by Asp170 and Glu189. Residues 197 to 218 form a helical membrane-spanning segment; sequence FHMLGVAGVFGGSLFSAMHGSL. His198 contributes to the chlorophyll a binding site. A quinone contacts are provided by residues His215 and 264–265; that span reads SF. His215 is a Fe cation binding site. His272 serves as a coordination point for Fe cation. The chain crosses the membrane as a helical span at residues 274-288; it reads FLTAWPVVGIWFTAL. Residues His332, Glu333, Asp342, and Ala344 each coordinate [CaMn4O5] cluster. A propeptide spanning residues 345–353 is cleaved from the precursor; the sequence is AVEAPSTNG.

The protein belongs to the reaction center PufL/M/PsbA/D family. PSII is composed of 1 copy each of membrane proteins PsbA, PsbB, PsbC, PsbD, PsbE, PsbF, PsbH, PsbI, PsbJ, PsbK, PsbL, PsbM, PsbT, PsbX, PsbY, PsbZ, Psb30/Ycf12, at least 3 peripheral proteins of the oxygen-evolving complex and a large number of cofactors. It forms dimeric complexes. Requires The D1/D2 heterodimer binds P680, chlorophylls that are the primary electron donor of PSII, and subsequent electron acceptors. It shares a non-heme iron and each subunit binds pheophytin, quinone, additional chlorophylls, carotenoids and lipids. D1 provides most of the ligands for the Mn4-Ca-O5 cluster of the oxygen-evolving complex (OEC). There is also a Cl(-1) ion associated with D1 and D2, which is required for oxygen evolution. The PSII complex binds additional chlorophylls, carotenoids and specific lipids. as cofactor. In terms of processing, tyr-161 forms a radical intermediate that is referred to as redox-active TyrZ, YZ or Y-Z. C-terminally processed by CTPA; processing is essential to allow assembly of the oxygen-evolving complex and thus photosynthetic growth.

The protein resides in the plastid. The protein localises to the chloroplast thylakoid membrane. The catalysed reaction is 2 a plastoquinone + 4 hnu + 2 H2O = 2 a plastoquinol + O2. Its function is as follows. Photosystem II (PSII) is a light-driven water:plastoquinone oxidoreductase that uses light energy to abstract electrons from H(2)O, generating O(2) and a proton gradient subsequently used for ATP formation. It consists of a core antenna complex that captures photons, and an electron transfer chain that converts photonic excitation into a charge separation. The D1/D2 (PsbA/PsbD) reaction center heterodimer binds P680, the primary electron donor of PSII as well as several subsequent electron acceptors. This chain is Photosystem II protein D1, found in Barbarea verna (Land cress).